We begin with the raw amino-acid sequence, 952 residues long: Meiotic coiled-coil protein 3 (952 aa).

Coiled-coil stretches lie at residues 283-611 (QLLQ…KEHL), 684-716 (TKKF…EDKL), and 839-942 (SLEN…RERE).

The protein resides in the cytoplasm. In terms of biological role, has a role in meiosis. This is Meiotic coiled-coil protein 3 (mcp3) from Schizosaccharomyces pombe (strain 972 / ATCC 24843) (Fission yeast).